A 425-amino-acid chain; its full sequence is Pleckstrin homology domain-containing family A member 2 (425 aa).

Positions 7–113 constitute a PH 1 domain; it reads QNRICGFLDI…WVEALNQASK (107 aa). Lys-141 participates in a covalent cross-link: Glycyl lysine isopeptide (Lys-Gly) (interchain with G-Cter in SUMO2). At Ser-184 the chain carries Phosphoserine. Residues 198 to 298 enclose the PH 2 domain; the sequence is PLIKSGYCVK…WIEGIGAAVQ (101 aa). Polar residues predominate over residues 310–331; sequence SRSISLTRPGSSTLTSAPNSIL. The interval 310-425 is disordered; the sequence is SRSISLTRPG…DDENIRTSDV (116 aa). Residues Ser-314 and Ser-349 each carry the phosphoserine modification. Composition is skewed to basic and acidic residues over residues 363-375 and 400-410; these read AEEK…HAPE and RSEPQHPKEKP.

In terms of assembly, binds MPDZ and PTPN13.

The protein resides in the cytoplasm. It is found in the cell membrane. It localises to the nucleus. Binds specifically to phosphatidylinositol 3,4-diphosphate (PtdIns3,4P2), but not to other phosphoinositides. May recruit other proteins to the plasma membrane. This Mus musculus (Mouse) protein is Pleckstrin homology domain-containing family A member 2 (Plekha2).